The sequence spans 283 residues: Bifunctional protein FolD (283 aa).

Residues 164–166 (GRS), S189, and I230 contribute to the NADP(+) site.

The protein belongs to the tetrahydrofolate dehydrogenase/cyclohydrolase family. As to quaternary structure, homodimer.

It catalyses the reaction (6R)-5,10-methylene-5,6,7,8-tetrahydrofolate + NADP(+) = (6R)-5,10-methenyltetrahydrofolate + NADPH. The enzyme catalyses (6R)-5,10-methenyltetrahydrofolate + H2O = (6R)-10-formyltetrahydrofolate + H(+). The protein operates within one-carbon metabolism; tetrahydrofolate interconversion. Its function is as follows. Catalyzes the oxidation of 5,10-methylenetetrahydrofolate to 5,10-methenyltetrahydrofolate and then the hydrolysis of 5,10-methenyltetrahydrofolate to 10-formyltetrahydrofolate. This is Bifunctional protein FolD from Lactobacillus delbrueckii subsp. bulgaricus (strain ATCC BAA-365 / Lb-18).